The following is a 442-amino-acid chain: UDP-N-acetylmuramoylalanine--D-glutamate ligase (442 aa).

115 to 121 is an ATP binding site; it reads GSNGKST.

Belongs to the MurCDEF family.

The protein resides in the cytoplasm. It catalyses the reaction UDP-N-acetyl-alpha-D-muramoyl-L-alanine + D-glutamate + ATP = UDP-N-acetyl-alpha-D-muramoyl-L-alanyl-D-glutamate + ADP + phosphate + H(+). It participates in cell wall biogenesis; peptidoglycan biosynthesis. Cell wall formation. Catalyzes the addition of glutamate to the nucleotide precursor UDP-N-acetylmuramoyl-L-alanine (UMA). This Vibrio vulnificus (strain YJ016) protein is UDP-N-acetylmuramoylalanine--D-glutamate ligase.